Reading from the N-terminus, the 510-residue chain is Protein HGV2 (510 aa).

The interval 95–227 is disordered; that stretch reads GVPEEDADGD…KENESEEDPD (133 aa). The segment covering 98–110 has biased composition (acidic residues); sequence EEDADGDSDQEQE. 2 stretches are compositionally biased toward basic and acidic residues: residues 111–129 and 142–199; these read QFEK…REEV and EERG…DKPV. The span at 204 to 217 shows a compositional bias: low complexity; the sequence is TEEPGTSGTSASSS. TPR repeat units follow at residues 260-293 and 302-335; these read AQCH…QKDL and AETY…LEAR. Positions 391–510 are disordered; that stretch reads DGSPFRQASE…TPKKDAAKRR (120 aa). Positions 398 to 411 are enriched in low complexity; it reads ASEGESSSGLGAST. Short sequence motifs (nuclear localization signal) lie at residues 444–451 and 465–471; these read VRRKRPSP and SKKAKQE. Residues 459-471 show a composition bias toward basic and acidic residues; sequence ESKENESKKAKQE.

The protein belongs to the NASP family. In terms of tissue distribution, embryo and larvae.

The protein resides in the nucleus. Functionally, may function as a nucleosome assembly factor during rapid embryonic cell divisions. This is Protein HGV2 (HGV2) from Halocynthia roretzi (Sea squirt).